A 340-amino-acid chain; its full sequence is Ketol-acid reductoisomerase (NADP(+)) (340 aa).

A KARI N-terminal Rossmann domain is found at 2–182 (AELYYDNQAD…GCTRAGVLRT (181 aa)). NADP(+) is bound by residues 25–28 (FGSQ), Ser-51, Ser-53, and 83–86 (DIGQ). His-108 is a catalytic residue. Gly-134 contributes to the NADP(+) binding site. The 146-residue stretch at 183 to 328 (TFAEETETDL…RELRRMMPFV (146 aa)) folds into the KARI C-terminal knotted domain. The Mg(2+) site is built by Asp-191, Glu-195, Glu-227, and Glu-231. Ser-252 is a substrate binding site.

Belongs to the ketol-acid reductoisomerase family. It depends on Mg(2+) as a cofactor.

The catalysed reaction is (2R)-2,3-dihydroxy-3-methylbutanoate + NADP(+) = (2S)-2-acetolactate + NADPH + H(+). It carries out the reaction (2R,3R)-2,3-dihydroxy-3-methylpentanoate + NADP(+) = (S)-2-ethyl-2-hydroxy-3-oxobutanoate + NADPH + H(+). It participates in amino-acid biosynthesis; L-isoleucine biosynthesis; L-isoleucine from 2-oxobutanoate: step 2/4. It functions in the pathway amino-acid biosynthesis; L-valine biosynthesis; L-valine from pyruvate: step 2/4. Its function is as follows. Involved in the biosynthesis of branched-chain amino acids (BCAA). Catalyzes an alkyl-migration followed by a ketol-acid reduction of (S)-2-acetolactate (S2AL) to yield (R)-2,3-dihydroxy-isovalerate. In the isomerase reaction, S2AL is rearranged via a Mg-dependent methyl migration to produce 3-hydroxy-3-methyl-2-ketobutyrate (HMKB). In the reductase reaction, this 2-ketoacid undergoes a metal-dependent reduction by NADPH to yield (R)-2,3-dihydroxy-isovalerate. This chain is Ketol-acid reductoisomerase (NADP(+)), found in Chloroflexus aggregans (strain MD-66 / DSM 9485).